The sequence spans 78 residues: Translation initiation factor IF-1 (78 aa).

One can recognise an S1-like domain in the interval 2–78 (SKNNLNETES…TRARITYRFK (77 aa)).

Belongs to the IF-1 family. In terms of assembly, component of the 30S ribosomal translation pre-initiation complex which assembles on the 30S ribosome in the order IF-2 and IF-3, IF-1 and N-formylmethionyl-tRNA(fMet); mRNA recruitment can occur at any time during PIC assembly.

Its subcellular location is the cytoplasm. In terms of biological role, one of the essential components for the initiation of protein synthesis. Stabilizes the binding of IF-2 and IF-3 on the 30S subunit to which N-formylmethionyl-tRNA(fMet) subsequently binds. Helps modulate mRNA selection, yielding the 30S pre-initiation complex (PIC). Upon addition of the 50S ribosomal subunit IF-1, IF-2 and IF-3 are released leaving the mature 70S translation initiation complex. This chain is Translation initiation factor IF-1, found in Onion yellows phytoplasma (strain OY-M).